Reading from the N-terminus, the 168-residue chain is Small ribosomal subunit protein uS5 (168 aa).

One can recognise an S5 DRBM domain in the interval 12 to 75; the sequence is YQEKLVSVTR…DQAKKNMVYI (64 aa).

It belongs to the universal ribosomal protein uS5 family. As to quaternary structure, part of the 30S ribosomal subunit. Contacts proteins S4 and S8.

Functionally, with S4 and S12 plays an important role in translational accuracy. Its function is as follows. Located at the back of the 30S subunit body where it stabilizes the conformation of the head with respect to the body. This Legionella pneumophila (strain Paris) protein is Small ribosomal subunit protein uS5.